The chain runs to 524 residues: mRNA cap guanine-N(7) methyltransferase (524 aa).

Residues 1–155 (MSDKEAGVAS…DKKRAHDEAE (155 aa)) form a disordered region. The span at 19 to 40 (NKDEVDVKNTEEHSKQESKSDI) shows a compositional bias: basic and acidic residues. The segment covering 68–77 (NNKVISSVYN) has biased composition (polar residues). Residues 90–99 (KTTDKYDKYG) show a composition bias toward basic and acidic residues. The span at 100–112 (SRSTPIATPTAPV) shows a compositional bias: polar residues. Residues 214-522 (SPIYKLRNFN…FYIGFVFEKL (309 aa)) enclose the mRNA cap 0 methyltransferase domain. Position 223 to 224 (223 to 224 (NN)) interacts with mRNA. The S-adenosyl-L-methionine site is built by Lys227, Cys251, Asp273, Asp319, Gln349, and Tyr354.

Belongs to the class I-like SAM-binding methyltransferase superfamily. mRNA cap 0 methyltransferase family.

Its subcellular location is the nucleus. The catalysed reaction is a 5'-end (5'-triphosphoguanosine)-ribonucleoside in mRNA + S-adenosyl-L-methionine = a 5'-end (N(7)-methyl 5'-triphosphoguanosine)-ribonucleoside in mRNA + S-adenosyl-L-homocysteine. Responsible for methylating the 5'-cap structure of mRNAs. The sequence is that of mRNA cap guanine-N(7) methyltransferase (ABD1) from Debaryomyces hansenii (strain ATCC 36239 / CBS 767 / BCRC 21394 / JCM 1990 / NBRC 0083 / IGC 2968) (Yeast).